Here is a 115-residue protein sequence, read N- to C-terminus: SPbeta prophage-derived uncharacterized protein YoqS (115 aa).

This chain is SPbeta prophage-derived uncharacterized protein YoqS (yoqS), found in Bacillus subtilis (strain 168).